Reading from the N-terminus, the 97-residue chain is uncharacterized protein (97 aa).

3 consecutive transmembrane segments (helical) span residues 5 to 25, 27 to 47, and 77 to 97; these read TLVA…SLSV, MVFV…LICY, and IISI…VFIL.

It localises to the membrane. This is an uncharacterized protein from Saccharomyces cerevisiae (strain ATCC 204508 / S288c) (Baker's yeast).